The chain runs to 94 residues: Co-chaperonin GroES (94 aa).

The protein belongs to the GroES chaperonin family. In terms of assembly, heptamer of 7 subunits arranged in a ring. Interacts with the chaperonin GroEL.

Its subcellular location is the cytoplasm. Together with the chaperonin GroEL, plays an essential role in assisting protein folding. The GroEL-GroES system forms a nano-cage that allows encapsulation of the non-native substrate proteins and provides a physical environment optimized to promote and accelerate protein folding. GroES binds to the apical surface of the GroEL ring, thereby capping the opening of the GroEL channel. In Lactobacillus delbrueckii subsp. bulgaricus (strain ATCC BAA-365 / Lb-18), this protein is Co-chaperonin GroES.